We begin with the raw amino-acid sequence, 216 residues long: Putative transmembrane protein RNF32-DT (216 aa).

Residues 177–197 (WIPLLLVAGCVSCFVGLAVCV) traverse the membrane as a helical segment.

Expressed only in testis.

It localises to the cytoplasm. The protein resides in the membrane. This chain is Putative transmembrane protein RNF32-DT, found in Homo sapiens (Human).